Here is a 284-residue protein sequence, read N- to C-terminus: uncharacterized protein (284 aa).

Belongs to the IIV-6 436R family.

This is an uncharacterized protein from Invertebrate iridescent virus 3 (IIV-3).